The primary structure comprises 166 residues: MAASVTVIGIDPGSQCTGWGIVREASGVLTLVNCGAIRPKGADFAARLGDLYRQLADVVRAHTPDEAAVEDVHAAQNVATALKLGQARGVVVAACAAHGVPVIDYRPSVIKKALVGTGRAEKEQVGYMVGQVLGVRPDWKLDTGDALAAAICHLNQRRLTRLAGLA.

Catalysis depends on residues Asp-11, Glu-70, and Asp-142. The Mg(2+) site is built by Asp-11, Glu-70, and Asp-142.

The protein belongs to the RuvC family. Homodimer which binds Holliday junction (HJ) DNA. The HJ becomes 2-fold symmetrical on binding to RuvC with unstacked arms; it has a different conformation from HJ DNA in complex with RuvA. In the full resolvosome a probable DNA-RuvA(4)-RuvB(12)-RuvC(2) complex forms which resolves the HJ. It depends on Mg(2+) as a cofactor.

The protein resides in the cytoplasm. The catalysed reaction is Endonucleolytic cleavage at a junction such as a reciprocal single-stranded crossover between two homologous DNA duplexes (Holliday junction).. The RuvA-RuvB-RuvC complex processes Holliday junction (HJ) DNA during genetic recombination and DNA repair. Endonuclease that resolves HJ intermediates. Cleaves cruciform DNA by making single-stranded nicks across the HJ at symmetrical positions within the homologous arms, yielding a 5'-phosphate and a 3'-hydroxyl group; requires a central core of homology in the junction. The consensus cleavage sequence is 5'-(A/T)TT(C/G)-3'. Cleavage occurs on the 3'-side of the TT dinucleotide at the point of strand exchange. HJ branch migration catalyzed by RuvA-RuvB allows RuvC to scan DNA until it finds its consensus sequence, where it cleaves and resolves the cruciform DNA. This is Crossover junction endodeoxyribonuclease RuvC from Nitratidesulfovibrio vulgaris (strain DP4) (Desulfovibrio vulgaris).